Here is a 424-residue protein sequence, read N- to C-terminus: GTPase HflX (424 aa).

The Hflx-type G domain maps to 194 to 364; it reads YTVALTGYTG…AVVEMLPEKV (171 aa). Residues 200 to 207, 225 to 229, 246 to 249, 314 to 317, and 342 to 344 contribute to the GTP site; these read GYTGAGKT, FATLS, DTIG, NKID, and SAA. Residues threonine 207 and threonine 227 each contribute to the Mg(2+) site.

Belongs to the TRAFAC class OBG-HflX-like GTPase superfamily. HflX GTPase family. As to quaternary structure, monomer. Associates with the 50S ribosomal subunit. It depends on Mg(2+) as a cofactor.

The protein resides in the cytoplasm. In terms of biological role, GTPase that associates with the 50S ribosomal subunit and may have a role during protein synthesis or ribosome biogenesis. This is GTPase HflX from Thermofilum pendens (strain DSM 2475 / Hrk 5).